Consider the following 234-residue polypeptide: Sugar fermentation stimulation protein homolog (234 aa).

It belongs to the SfsA family.

The polypeptide is Sugar fermentation stimulation protein homolog (Shewanella sp. (strain MR-4)).